We begin with the raw amino-acid sequence, 121 residues long: Small ribosomal subunit protein uS13 (121 aa).

Residues 94-121 (GLPVRGQNTKNNARTRKGPRRTVANKKK) form a disordered region. The span at 106–121 (ARTRKGPRRTVANKKK) shows a compositional bias: basic residues.

This sequence belongs to the universal ribosomal protein uS13 family. As to quaternary structure, part of the 30S ribosomal subunit. Forms a loose heterodimer with protein S19. Forms two bridges to the 50S subunit in the 70S ribosome.

Its function is as follows. Located at the top of the head of the 30S subunit, it contacts several helices of the 16S rRNA. In the 70S ribosome it contacts the 23S rRNA (bridge B1a) and protein L5 of the 50S subunit (bridge B1b), connecting the 2 subunits; these bridges are implicated in subunit movement. Contacts the tRNAs in the A and P-sites. The chain is Small ribosomal subunit protein uS13 from Anoxybacillus flavithermus (strain DSM 21510 / WK1).